We begin with the raw amino-acid sequence, 137 residues long: MRHYEIVFLVHPDQSEQVPGMIERYTGILTQAGGQIHRLEDWGRRQLAYPIIELHKAHYVLLNVETTAEAVEELETAFRFNDAVLRSMVMRTKAAITEASPMAKAKDERDTRRSSEERAPRAEAAEEVEESAENTAE.

Positions 96–137 are disordered; the sequence is ITEASPMAKAKDERDTRRSSEERAPRAEAAEEVEESAENTAE. A compositionally biased stretch (basic and acidic residues) spans 104–124; it reads KAKDERDTRRSSEERAPRAEA. A compositionally biased stretch (acidic residues) spans 125 to 137; sequence AEEVEESAENTAE.

The protein belongs to the bacterial ribosomal protein bS6 family.

Its function is as follows. Binds together with bS18 to 16S ribosomal RNA. The sequence is that of Small ribosomal subunit protein bS6 from Shewanella halifaxensis (strain HAW-EB4).